The sequence spans 268 residues: Undecaprenyl-diphosphatase (268 aa).

8 helical membrane-spanning segments follow: residues 1 to 21, 39 to 59, 85 to 105, 110 to 130, 144 to 164, 187 to 207, 221 to 241, and 247 to 267; these read MSLI…FLPI, QGPL…LVYF, ALLV…LVAF, ALRS…PLWL, MSFK…IPGA, FSML…LIEL, DGLI…AVLM, and IGFL…LVFF.

The protein belongs to the UppP family.

It is found in the cell inner membrane. It carries out the reaction di-trans,octa-cis-undecaprenyl diphosphate + H2O = di-trans,octa-cis-undecaprenyl phosphate + phosphate + H(+). Functionally, catalyzes the dephosphorylation of undecaprenyl diphosphate (UPP). Confers resistance to bacitracin. This Maricaulis maris (strain MCS10) (Caulobacter maris) protein is Undecaprenyl-diphosphatase.